The primary structure comprises 312 residues: Pseudouridine-5'-phosphate glycosidase (312 aa).

The active-site Proton donor is E31. Residues K93 and V113 each coordinate substrate. D145 contributes to the Mn(2+) binding site. Position 147-149 (147-149) interacts with substrate; the sequence is SAD. Residue K166 is the Nucleophile of the active site.

This sequence belongs to the pseudouridine-5'-phosphate glycosidase family. In terms of assembly, homotrimer. The cofactor is Mn(2+). Fe(2+) serves as cofactor. Co(2+) is required as a cofactor.

The enzyme catalyses D-ribose 5-phosphate + uracil = psi-UMP + H2O. Its activity is regulated as follows. Inhibited by Zn(2+) and Ni(2+). Functionally, catalyzes the reversible cleavage of pseudouridine 5'-phosphate (PsiMP) to ribose 5-phosphate and uracil. Functions biologically in the cleavage direction, as part of a pseudouridine degradation pathway. The sequence is that of Pseudouridine-5'-phosphate glycosidase from Escherichia coli (strain K12).